Reading from the N-terminus, the 127-residue chain is Apolipoprotein C-IV (127 aa).

Positions 1-27 (MSLLRNRLQDLPALCLCVLVLACIGAC) are cleaved as a signal peptide.

The protein belongs to the apolipoprotein C4 family.

The protein resides in the secreted. Functionally, may participate in lipoprotein metabolism. This chain is Apolipoprotein C-IV (APOC4), found in Papio hamadryas (Hamadryas baboon).